The chain runs to 360 residues: Peptide chain release factor 1 (360 aa).

Position 235 is an N5-methylglutamine (Q235).

Belongs to the prokaryotic/mitochondrial release factor family. Methylated by PrmC. Methylation increases the termination efficiency of RF1.

Its subcellular location is the cytoplasm. In terms of biological role, peptide chain release factor 1 directs the termination of translation in response to the peptide chain termination codons UAG and UAA. This chain is Peptide chain release factor 1, found in Methylobacillus flagellatus (strain ATCC 51484 / DSM 6875 / VKM B-1610 / KT).